The following is a 204-amino-acid chain: Guanylate kinase (204 aa).

The Guanylate kinase-like domain maps to 18–196; it reads PKLFTISAPA…SYEVLKSIFI (179 aa). 25–32 provides a ligand contact to ATP; it reads APAGAGKT.

This sequence belongs to the guanylate kinase family.

It is found in the cytoplasm. The catalysed reaction is GMP + ATP = GDP + ADP. Essential for recycling GMP and indirectly, cGMP. The chain is Guanylate kinase from Chlamydia abortus (strain DSM 27085 / S26/3) (Chlamydophila abortus).